A 157-amino-acid polypeptide reads, in one-letter code: Endoribonuclease YbeY (157 aa).

H113, H117, and H123 together coordinate Zn(2+).

This sequence belongs to the endoribonuclease YbeY family. Requires Zn(2+) as cofactor.

Its subcellular location is the cytoplasm. In terms of biological role, single strand-specific metallo-endoribonuclease involved in late-stage 70S ribosome quality control and in maturation of the 3' terminus of the 16S rRNA. The chain is Endoribonuclease YbeY from Ehrlichia ruminantium (strain Welgevonden).